The primary structure comprises 254 residues: MRSLDYAKVITKLVSFIQEKVEESNVKGVILGISGGVDSATVAYLAARAIGKEKVLGLVMPYHINRDVEDALLVCNNLGINYKVINIKSIVNEFEKNLDFELNNVSRGNIMSRTRMILLYAHANSKNYLVLGTSNRSEFLTGYFTKWGDSASDYAPLINLYKTEVWNIARILGVPNEIINKKPSAGLWEGQTDEKDLGITYKLLDEILYRLVDLKMKKENIARELNIPLNKVEYVESLIKKSEHKRKLPIGPEI.

ATP is bound at residue 32 to 39 (GISGGVDS). Asp-38 is a Mg(2+) binding site. Arg-113 contacts deamido-NAD(+). Thr-133 is an ATP binding site. Glu-138 lines the Mg(2+) pocket. Positions 146 and 153 each coordinate deamido-NAD(+). ATP is bound by residues Lys-162 and Ser-184. Residue 244 to 245 (HK) coordinates deamido-NAD(+).

It belongs to the NAD synthetase family. As to quaternary structure, homodimer.

It carries out the reaction deamido-NAD(+) + NH4(+) + ATP = AMP + diphosphate + NAD(+) + H(+). The protein operates within cofactor biosynthesis; NAD(+) biosynthesis; NAD(+) from deamido-NAD(+) (ammonia route): step 1/1. Functionally, catalyzes the ATP-dependent amidation of deamido-NAD to form NAD. Uses ammonia as a nitrogen source. The polypeptide is NH(3)-dependent NAD(+) synthetase (Thermococcus sibiricus (strain DSM 12597 / MM 739)).